A 778-amino-acid chain; its full sequence is uncharacterized protein (778 aa).

Polar residues-rich tracts occupy residues 1 to 11 (MPISSPGTRCS), 18 to 34 (TLQQ…QSLG), and 41 to 51 (GSITENYVQDS). The tract at residues 1-60 (MPISSPGTRCSSDLKDPTLQQYSAESVSTEQSLGTFEESKGSITENYVQDSSVDEHDDGN) is disordered. 2 consecutive transmembrane segments (helical) span residues 356–381 (YILM…APII) and 401–423 (GFLA…GAHI).

This sequence belongs to the TMCO4 family.

It is found in the golgi apparatus membrane. This is an uncharacterized protein from Schizosaccharomyces pombe (strain 972 / ATCC 24843) (Fission yeast).